We begin with the raw amino-acid sequence, 360 residues long: uncharacterized protein (360 aa).

Acidic residues predominate over residues 22–32 (EEDVEPNEEAE). The disordered stretch occupies residues 22–55 (EEDVEPNEEAEGPGGVHKKRRGARKKNRRQRMEG). Basic residues predominate over residues 37-50 (VHKKRRGARKKNRR).

This is an uncharacterized protein from Caenorhabditis elegans.